The following is a 489-amino-acid chain: Glutamyl-tRNA(Gln) amidotransferase subunit A (489 aa).

Residues Lys-80 and Ser-160 each act as charge relay system in the active site. Ser-184 acts as the Acyl-ester intermediate in catalysis.

It belongs to the amidase family. GatA subfamily. As to quaternary structure, heterotrimer of A, B and C subunits.

It carries out the reaction L-glutamyl-tRNA(Gln) + L-glutamine + ATP + H2O = L-glutaminyl-tRNA(Gln) + L-glutamate + ADP + phosphate + H(+). Allows the formation of correctly charged Gln-tRNA(Gln) through the transamidation of misacylated Glu-tRNA(Gln) in organisms which lack glutaminyl-tRNA synthetase. The reaction takes place in the presence of glutamine and ATP through an activated gamma-phospho-Glu-tRNA(Gln). The sequence is that of Glutamyl-tRNA(Gln) amidotransferase subunit A from Wolbachia sp. subsp. Drosophila simulans (strain wRi).